Consider the following 95-residue polypeptide: Probable FAD-linked sulfhydryl oxidase OPG072 (95 aa).

Residues 1-8 (MNPKHWGR) lie on the Intravirion side of the membrane. One can recognise an ERV/ALR sulfhydryl oxidase domain in the interval 1-95 (MNPKHWGRAV…AIDVTKVNPL (95 aa)). Residues 9-25 (AVWTIIFIVLSQAGLDG) form a helical membrane-spanning segment. The Virion surface portion of the chain corresponds to 26 to 95 (NIEACKRKLY…AIDVTKVNPL (70 aa)). Cys-43 and Cys-46 are joined by a disulfide.

The protein belongs to the orthopoxvirus OPG072 family. In terms of assembly, interacts with OPG128/A2.5; this interaction involves formation of a transient disulfide-bonded intermediate, allowing disulfide bond transfer. FAD is required as a cofactor.

The protein resides in the virion membrane. It localises to the host cytoplasm. The enzyme catalyses 2 R'C(R)SH + O2 = R'C(R)S-S(R)CR' + H2O2. FAD-dependent sulfhydryl oxidase that catalyzes disulfide bond formation. The complete pathway for formation of disulfide bonds in intracellular virion membrane proteins sequentially involves thiol-disulfide transfer between OPG072/E10, OPG128/A2.5 and OPG088/G4. The chain is Probable FAD-linked sulfhydryl oxidase OPG072 (OPG072) from Bos taurus (Bovine).